Reading from the N-terminus, the 351-residue chain is S-adenosylmethionine:tRNA ribosyltransferase-isomerase (351 aa).

This sequence belongs to the QueA family. As to quaternary structure, monomer.

It is found in the cytoplasm. It catalyses the reaction 7-aminomethyl-7-carbaguanosine(34) in tRNA + S-adenosyl-L-methionine = epoxyqueuosine(34) in tRNA + adenine + L-methionine + 2 H(+). The protein operates within tRNA modification; tRNA-queuosine biosynthesis. Its function is as follows. Transfers and isomerizes the ribose moiety from AdoMet to the 7-aminomethyl group of 7-deazaguanine (preQ1-tRNA) to give epoxyqueuosine (oQ-tRNA). In Hydrogenovibrio crunogenus (strain DSM 25203 / XCL-2) (Thiomicrospira crunogena), this protein is S-adenosylmethionine:tRNA ribosyltransferase-isomerase.